The chain runs to 649 residues: Arylsulfatase (649 aa).

An N-terminal signal peptide occupies residues 1–22 (MLQRLVVALCLLGFAALTAAAA). Ca(2+)-binding residues include aspartate 34 and aspartate 35. A glycan (N-linked (GlcNAc...) asparagine) is linked at asparagine 41. Position 72 (cysteine 72) interacts with Ca(2+). The Nucleophile role is filled by cysteine 72. Cysteine 72 carries the 3-oxoalanine (Cys) modification. N-linked (GlcNAc...) asparagine glycosylation is found at asparagine 89, asparagine 224, and asparagine 279. 2 residues coordinate Ca(2+): aspartate 324 and asparagine 325. Asparagine 445, asparagine 489, and asparagine 531 each carry an N-linked (GlcNAc...) asparagine glycan.

It belongs to the sulfatase family. The cofactor is Ca(2+). The conversion to 3-oxoalanine (also known as C-formylglycine, FGly), of a serine or cysteine residue in prokaryotes and of a cysteine residue in eukaryotes, is critical for catalytic activity.

It localises to the periplasm. The catalysed reaction is an aryl sulfate + H2O = a phenol + sulfate + H(+). Its activity is regulated as follows. Inhibited by Na(3)BO(3) and KCN. No inhibition by sodium dodecyl sulfate, even at high concentration. In terms of biological role, is commonly produced by soil microorganisms and plays an important role in the mineralization of sulfates. The polypeptide is Arylsulfatase (Volvox carteri (Green alga)).